The following is a 439-amino-acid chain: MKGLYIKTYGCQMNVYDSVLMENVIKPLGFNVVSDAGKADLVILNTCHIREKAAEKLYSELGKIHSLRKEMTIVVAGCVAQAEGEEVFRRAPFVDIVVGPQSIATLPELIVKASRSKGHVINTDFPEVAKFDKLPDECYGNSQGSSAFLAIQEGCDKFCTFCVVPYTRGAEYSRPVNEIFREALKLVANGANEINLLGQNVNAYHGECEGEVWDLGKLISHIAKIEKLERIRYTTSHPRDMHESLYLAHAEEPKLMPFVHLPVQSGSNKILHAMNRKHTAEEYLEIIDRFRKLKPEIEFSSDFIVGFPGETEKDFEETMKLVEKVRYAQAYSFKYSPRPGTPGAERKDQVPEEVKTERLLRLQKLISKQQLEFNQSMVGKTIPVLFSDKKGKHQNQIIGKSPYMQSVCIDDSEDKYRDKIVNVKVLEARQSSLLGCAFH.

An MTTase N-terminal domain is found at 2-115; it reads KGLYIKTYGC…LPELIVKASR (114 aa). [4Fe-4S] cluster contacts are provided by C11, C47, C78, C155, C159, and C162. One can recognise a Radical SAM core domain in the interval 141–372; the sequence is NSQGSSAFLA…QKLISKQQLE (232 aa). Positions 375–439 constitute a TRAM domain; it reads QSMVGKTIPV…QSSLLGCAFH (65 aa).

The protein belongs to the methylthiotransferase family. MiaB subfamily. In terms of assembly, monomer. Requires [4Fe-4S] cluster as cofactor.

The protein resides in the cytoplasm. The enzyme catalyses N(6)-dimethylallyladenosine(37) in tRNA + (sulfur carrier)-SH + AH2 + 2 S-adenosyl-L-methionine = 2-methylsulfanyl-N(6)-dimethylallyladenosine(37) in tRNA + (sulfur carrier)-H + 5'-deoxyadenosine + L-methionine + A + S-adenosyl-L-homocysteine + 2 H(+). Functionally, catalyzes the methylthiolation of N6-(dimethylallyl)adenosine (i(6)A), leading to the formation of 2-methylthio-N6-(dimethylallyl)adenosine (ms(2)i(6)A) at position 37 in tRNAs that read codons beginning with uridine. This Wolbachia pipientis wMel protein is tRNA-2-methylthio-N(6)-dimethylallyladenosine synthase.